We begin with the raw amino-acid sequence, 631 residues long: KIF-binding protein (631 aa).

A compositionally biased stretch (acidic residues) spans 60–70 (EQGEAGDEADC). The segment at 60–88 (EQGEAGDEADCESSQTADGEPEDGFEKTF) is disordered.

This sequence belongs to the KIF-binding protein family. At 30 hpf, primarily expressed in central and peripheral neurons.

It is found in the cytoplasm. The protein resides in the cytoskeleton. Functionally, activator of KIF1B plus-end-directed microtubule motor activity. Required for organization of axonal microtubules, and axonal outgrowth and maintenance during peripheral and central nervous system development. The polypeptide is KIF-binding protein (kifbp) (Danio rerio (Zebrafish)).